A 212-amino-acid chain; its full sequence is MNDAALAPDVSAALERGLQAQSLDAAFAAPLLRYLALLVRWNKTYNLTAVRDPREMVTRHLLDSLAMQPYIASGALADLGTGPGLPGIPLAITRPQLQVTLVESNGKKARFMREALRHLELGNARVAESRAEALAEPAAYDHLTARALDTLAGIIAVGGHLLRPGGSLLAMKGVYPHEEIAALPAGWTVGEVHPLQVPGLEGERHLVVVRKG.

Residues G80, L85, 131 to 132 (AE), and R146 contribute to the S-adenosyl-L-methionine site.

Belongs to the methyltransferase superfamily. RNA methyltransferase RsmG family.

It is found in the cytoplasm. It carries out the reaction guanosine(527) in 16S rRNA + S-adenosyl-L-methionine = N(7)-methylguanosine(527) in 16S rRNA + S-adenosyl-L-homocysteine. Specifically methylates the N7 position of guanine in position 527 of 16S rRNA. The protein is Ribosomal RNA small subunit methyltransferase G of Xanthomonas axonopodis pv. citri (strain 306).